A 242-amino-acid polypeptide reads, in one-letter code: UPF0309 protein BAbS19_II03080 (242 aa).

The region spanning 30-214 (AADLIAAAAR…ARLVGEGDAP (185 aa)) is the SIS domain.

Belongs to the UPF0309 family.

This chain is UPF0309 protein BAbS19_II03080, found in Brucella abortus (strain S19).